A 343-amino-acid polypeptide reads, in one-letter code: Isopentenyl-diphosphate delta-isomerase (343 aa).

9 to 10 (RK) contacts substrate. Residues Ser-66, 67 to 69 (SMT), Ser-98, and Asn-126 each bind FMN. 98 to 100 (SQR) is a binding site for substrate. Gln-161 contributes to the substrate binding site. Glu-162 is a binding site for Mg(2+). Residues Lys-193, Thr-223, 273 to 275 (GIR), and 294 to 295 (AA) contribute to the FMN site.

Belongs to the IPP isomerase type 2 family. In terms of assembly, homooctamer. Dimer of tetramers. The cofactor is FMN. Requires NADPH as cofactor. It depends on Mg(2+) as a cofactor.

The protein resides in the cytoplasm. The catalysed reaction is isopentenyl diphosphate = dimethylallyl diphosphate. Involved in the biosynthesis of isoprenoids. Catalyzes the 1,3-allylic rearrangement of the homoallylic substrate isopentenyl (IPP) to its allylic isomer, dimethylallyl diphosphate (DMAPP). The sequence is that of Isopentenyl-diphosphate delta-isomerase from Hydrogenovibrio crunogenus (strain DSM 25203 / XCL-2) (Thiomicrospira crunogena).